We begin with the raw amino-acid sequence, 349 residues long: Protein-glutamate methylesterase/protein-glutamine glutaminase (349 aa).

Residues 5–122 enclose the Response regulatory domain; it reads RVLSVDDSAL…REGMLAYSEM (118 aa). D56 is modified (4-aspartylphosphate). Residues 152-344 enclose the CheB-type methylesterase domain; it reads LLSSEKLIAI…QQMLAKISAG (193 aa). Active-site residues include S164, H190, and D286.

This sequence belongs to the CheB family. Post-translationally, phosphorylated by CheA. Phosphorylation of the N-terminal regulatory domain activates the methylesterase activity.

It is found in the cytoplasm. It carries out the reaction [protein]-L-glutamate 5-O-methyl ester + H2O = L-glutamyl-[protein] + methanol + H(+). The enzyme catalyses L-glutaminyl-[protein] + H2O = L-glutamyl-[protein] + NH4(+). Functionally, involved in chemotaxis. Part of a chemotaxis signal transduction system that modulates chemotaxis in response to various stimuli. Catalyzes the demethylation of specific methylglutamate residues introduced into the chemoreceptors (methyl-accepting chemotaxis proteins or MCP) by CheR. Also mediates the irreversible deamidation of specific glutamine residues to glutamic acid. The polypeptide is Protein-glutamate methylesterase/protein-glutamine glutaminase (Escherichia coli O157:H7).